The sequence spans 141 residues: Large ribosomal subunit protein uL11 (141 aa).

This sequence belongs to the universal ribosomal protein uL11 family. In terms of assembly, part of the ribosomal stalk of the 50S ribosomal subunit. Interacts with L10 and the large rRNA to form the base of the stalk. L10 forms an elongated spine to which L12 dimers bind in a sequential fashion forming a multimeric L10(L12)X complex. Post-translationally, one or more lysine residues are methylated.

Functionally, forms part of the ribosomal stalk which helps the ribosome interact with GTP-bound translation factors. This is Large ribosomal subunit protein uL11 from Streptococcus uberis (strain ATCC BAA-854 / 0140J).